The following is a 136-amino-acid chain: Small ribosomal subunit protein uS9 (136 aa).

Belongs to the universal ribosomal protein uS9 family.

The protein is Small ribosomal subunit protein uS9 of Borrelia turicatae (strain 91E135).